The following is a 153-amino-acid chain: FAD synthase (153 aa).

ATP is bound by residues 9 to 10 (TF), 14 to 17 (HPGH), Asn92, and Tyr119.

This sequence belongs to the archaeal FAD synthase family. As to quaternary structure, homodimer. The cofactor is a divalent metal cation.

It carries out the reaction FMN + ATP + H(+) = FAD + diphosphate. The protein operates within cofactor biosynthesis; FAD biosynthesis; FAD from FMN: step 1/1. Catalyzes the transfer of the AMP portion of ATP to flavin mononucleotide (FMN) to produce flavin adenine dinucleotide (FAD) coenzyme. The sequence is that of FAD synthase from Methanosphaerula palustris (strain ATCC BAA-1556 / DSM 19958 / E1-9c).